Consider the following 595-residue polypeptide: Arginine--tRNA ligase (595 aa).

The 'HIGH' region signature appears at 132–142 (ANPTGPLHVGH).

This sequence belongs to the class-I aminoacyl-tRNA synthetase family. As to quaternary structure, monomer.

It localises to the cytoplasm. It carries out the reaction tRNA(Arg) + L-arginine + ATP = L-arginyl-tRNA(Arg) + AMP + diphosphate. The sequence is that of Arginine--tRNA ligase from Cupriavidus pinatubonensis (strain JMP 134 / LMG 1197) (Cupriavidus necator (strain JMP 134)).